The following is a 151-amino-acid chain: uncharacterized protein (151 aa).

Positions 24, 27, 92, and 129 each coordinate [4Fe-4S] cluster.

This sequence belongs to the complex I 20 kDa subunit family. The cofactor is [4Fe-4S] cluster.

This is an uncharacterized protein from Methanocaldococcus jannaschii (strain ATCC 43067 / DSM 2661 / JAL-1 / JCM 10045 / NBRC 100440) (Methanococcus jannaschii).